We begin with the raw amino-acid sequence, 476 residues long: Cysteine--tRNA ligase (476 aa).

Residue Cys31 coordinates Zn(2+). The short motif at 33–43 (PTVYNYAHIGN) is the 'HIGH' region element. Positions 211, 236, and 240 each coordinate Zn(2+). Residues 269-273 (KMSKS) carry the 'KMSKS' region motif. Lys272 serves as a coordination point for ATP.

The protein belongs to the class-I aminoacyl-tRNA synthetase family. As to quaternary structure, monomer. Requires Zn(2+) as cofactor.

The protein resides in the cytoplasm. It catalyses the reaction tRNA(Cys) + L-cysteine + ATP = L-cysteinyl-tRNA(Cys) + AMP + diphosphate. The chain is Cysteine--tRNA ligase from Xanthomonas oryzae pv. oryzae (strain MAFF 311018).